The sequence spans 118 residues: D-dopachrome decarboxylase (118 aa).

P2 carries the post-translational modification N-acetylproline. N6-acetyllysine is present on K33.

Belongs to the MIF family. As to quaternary structure, homotrimer.

It localises to the cytoplasm. It catalyses the reaction D-dopachrome + H(+) = 5,6-dihydroxyindole + CO2. Functionally, tautomerization of D-dopachrome with decarboxylation to give 5,6-dihydroxyindole (DHI). The protein is D-dopachrome decarboxylase (DDT) of Bos taurus (Bovine).